A 421-amino-acid chain; its full sequence is Imidazolonepropionase (421 aa).

Residues histidine 81 and histidine 83 each coordinate Fe(3+). Zn(2+)-binding residues include histidine 81 and histidine 83. Residues arginine 90, tyrosine 153, and histidine 186 each coordinate 4-imidazolone-5-propanoate. Residue tyrosine 153 participates in N-formimidoyl-L-glutamate binding. Position 251 (histidine 251) interacts with Fe(3+). Histidine 251 contacts Zn(2+). Position 254 (glutamate 254) interacts with 4-imidazolone-5-propanoate. Aspartate 326 contributes to the Fe(3+) binding site. Aspartate 326 lines the Zn(2+) pocket. Residues asparagine 328 and glycine 330 each contribute to the N-formimidoyl-L-glutamate site. Residue serine 331 participates in 4-imidazolone-5-propanoate binding.

Belongs to the metallo-dependent hydrolases superfamily. HutI family. The cofactor is Zn(2+). It depends on Fe(3+) as a cofactor.

The protein resides in the cytoplasm. It catalyses the reaction 4-imidazolone-5-propanoate + H2O = N-formimidoyl-L-glutamate. It functions in the pathway amino-acid degradation; L-histidine degradation into L-glutamate; N-formimidoyl-L-glutamate from L-histidine: step 3/3. Its function is as follows. Catalyzes the hydrolytic cleavage of the carbon-nitrogen bond in imidazolone-5-propanoate to yield N-formimidoyl-L-glutamate. It is the third step in the universal histidine degradation pathway. This is Imidazolonepropionase from Streptococcus sanguinis (strain SK36).